Reading from the N-terminus, the 185-residue chain is Crossover junction endodeoxyribonuclease RuvC (185 aa).

Catalysis depends on residues Asp7, Glu66, and Asp137. Residues Asp7, Glu66, and Asp137 each contribute to the Mg(2+) site.

The protein belongs to the RuvC family. In terms of assembly, homodimer which binds Holliday junction (HJ) DNA. The HJ becomes 2-fold symmetrical on binding to RuvC with unstacked arms; it has a different conformation from HJ DNA in complex with RuvA. In the full resolvosome a probable DNA-RuvA(4)-RuvB(12)-RuvC(2) complex forms which resolves the HJ. Mg(2+) serves as cofactor.

The protein localises to the cytoplasm. It carries out the reaction Endonucleolytic cleavage at a junction such as a reciprocal single-stranded crossover between two homologous DNA duplexes (Holliday junction).. In terms of biological role, the RuvA-RuvB-RuvC complex processes Holliday junction (HJ) DNA during genetic recombination and DNA repair. Endonuclease that resolves HJ intermediates. Cleaves cruciform DNA by making single-stranded nicks across the HJ at symmetrical positions within the homologous arms, yielding a 5'-phosphate and a 3'-hydroxyl group; requires a central core of homology in the junction. The consensus cleavage sequence is 5'-(A/T)TT(C/G)-3'. Cleavage occurs on the 3'-side of the TT dinucleotide at the point of strand exchange. HJ branch migration catalyzed by RuvA-RuvB allows RuvC to scan DNA until it finds its consensus sequence, where it cleaves and resolves the cruciform DNA. The chain is Crossover junction endodeoxyribonuclease RuvC from Anaeromyxobacter sp. (strain K).